The sequence spans 240 residues: UDP-2,3-diacylglucosamine hydrolase (240 aa).

Mn(2+) contacts are provided by aspartate 8, histidine 10, aspartate 41, asparagine 79, and histidine 114. Residue 79–80 (NR) coordinates substrate. 5 residues coordinate substrate: aspartate 122, serine 160, asparagine 164, lysine 167, and histidine 195. Histidine 195 and histidine 197 together coordinate Mn(2+).

This sequence belongs to the LpxH family. Requires Mn(2+) as cofactor.

Its subcellular location is the cell inner membrane. It catalyses the reaction UDP-2-N,3-O-bis[(3R)-3-hydroxytetradecanoyl]-alpha-D-glucosamine + H2O = 2-N,3-O-bis[(3R)-3-hydroxytetradecanoyl]-alpha-D-glucosaminyl 1-phosphate + UMP + 2 H(+). Its pathway is glycolipid biosynthesis; lipid IV(A) biosynthesis; lipid IV(A) from (3R)-3-hydroxytetradecanoyl-[acyl-carrier-protein] and UDP-N-acetyl-alpha-D-glucosamine: step 4/6. In terms of biological role, hydrolyzes the pyrophosphate bond of UDP-2,3-diacylglucosamine to yield 2,3-diacylglucosamine 1-phosphate (lipid X) and UMP by catalyzing the attack of water at the alpha-P atom. Involved in the biosynthesis of lipid A, a phosphorylated glycolipid that anchors the lipopolysaccharide to the outer membrane of the cell. In Escherichia coli O7:K1 (strain IAI39 / ExPEC), this protein is UDP-2,3-diacylglucosamine hydrolase.